A 56-amino-acid polypeptide reads, in one-letter code: UPF0434 protein ECH_0194 (56 aa).

It belongs to the UPF0434 family.

In Ehrlichia chaffeensis (strain ATCC CRL-10679 / Arkansas), this protein is UPF0434 protein ECH_0194.